The chain runs to 94 residues: Sulfocarbamoylase-1 (94 aa).

As to quaternary structure, homodimer. Ubiquitous (at protein level). Highest levels of expression in crystalline style followed by digestive gland and mantle.

Strongly inhibited by the serine proteinase inhibitor AEBSF. Weakly inhibited by the proteinase inhibitors BSF and aprotinin, and by EDTA. Not inhibited by the proteinase inhibitors bestatin, E-64 and leupeptin. Its function is as follows. Hydrolysis of sulfocarbamoyl esters of paralytic shellfish toxins. Does not hydrolyze the carbamoyl esters of paralytic shellfish toxins. Ester hydrolysis is significantly affected by the stereochemistry of sulfate esters at C-11 of the substrate toxin. This chain is Sulfocarbamoylase-1, found in Megangulus venulosus (Japanese bivalve).